The sequence spans 791 residues: Probable phosphoketolase (791 aa).

It belongs to the XFP family. The cofactor is thiamine diphosphate.

This is Probable phosphoketolase from Chlorobaculum tepidum (strain ATCC 49652 / DSM 12025 / NBRC 103806 / TLS) (Chlorobium tepidum).